The sequence spans 730 residues: Transcription factor verF (730 aa).

The segment at 19-41 (YECSLCLKRYKRREHLFRHIGSH) adopts a C2H2-type 1 zinc-finger fold. The C2H2-type 2; atypical zinc-finger motif lies at 47-69 (YQCNSCDGAFQRADVLKRHLRTC). The segment at residues 83–109 (CDRCVRQKKACSSHQPCHSCAKKGAQC) is a DNA-binding region (zn(2)-C6 fungal-type). Residues 120 to 129 (RLSQHSSTNH) are compositionally biased toward polar residues. A disordered region spans residues 120 to 151 (RLSQHSSTNHTPKDQELSTQFTNPPPPPSTST).

It is found in the nucleus. In terms of biological role, transcription factor; part of the gene cluster that mediates the biosynthesis of the neurotoxin verrucosidin, a methylated alpha-pyrone polyketide that inhibits oxidative phosphorylation in mitochondria and thereby causes neurological diseases. This chain is Transcription factor verF, found in Penicillium polonicum.